A 129-amino-acid chain; its full sequence is MRKIYATGKRKTAIAKVWLTPGKGELSINEQSLNQWLGGHEAIKMKVMQPLLLTKQEQSVDIKAMVFGGGYSAQAEALRHGISKALNAYDIAFRAILKPKGLLTRDSRVVERKKYGKRKARRSPQFSKR.

It belongs to the universal ribosomal protein uS9 family.

This is Small ribosomal subunit protein uS9 from Helicobacter pylori (strain P12).